The following is a 772-amino-acid chain: Endoplasmic reticulum membrane sensor NFE2L1 (772 aa).

A helical; Signal-anchor for type II membrane protein transmembrane segment spans residues 7–24 (YLTEGLLQFTILLSLIGV). The disordered stretch occupies residues 108-148 (DPEGSVSGSQPNSGLALESSSGLQDVTGPDNGVRESETEQG). Residues 113–131 (VSGSQPNSGLALESSSGLQ) show a composition bias toward polar residues. Residues 191–199 (VFDYSHRQK) form a cholesterol recognition/amino acid consensus (CRAC) region region. Asn-348 and Asn-360 each carry an N-linked (GlcNAc...) asparagine glycan. The tract at residues 379 to 383 (SPEVE) is CPD. N-linked (GlcNAc...) asparagine glycosylation is found at Asn-412 and Asn-423. Disordered stretches follow at residues 470-532 (EEEF…DSET) and 582-613 (SALD…QMSR). Residues 476–480 (DSGLS) carry the Destruction motif motif. The span at 476-523 (DSGLSLDSSHSPSSLSSSEGSSSSSSSSSSSSSSASSSASSSFSEEGA) shows a compositional bias: low complexity. Ser-528 bears the Phosphoserine; by CK2 mark. Positions 598–613 (GSKEKQADFLDKQMSR) are enriched in basic and acidic residues. Ser-599 carries the phosphoserine; by PKA modification. Residues 654 to 717 (LIRDIRRRGK…RQMKQKVQSL (64 aa)) form the bZIP domain. A basic motif region spans residues 656–675 (RDIRRRGKNKMAAQNCRKRK). A leucine-zipper region spans residues 682-696 (LERDVEDLQRDKARL).

Belongs to the bZIP family. CNC subfamily. As to quaternary structure, interacts with KEAP1. Interacts (via CPD region) with FBXW7; leading to its ubiquitination and degradation. Interacts with SYVN1/HRD1; leading to its ubiquitination and degradation. Interacts (when ubiquitinated) with DDI2; leading to its cleavage. In terms of assembly, interacts (via the bZIP domain) with small MAF protein (MAFF, MAFG or MAFK); required for binding to antioxidant response elements (AREs) on DNA. Interacts (via Destruction motif) with BTRC; leading to its ubiquitination and degradation. Interacts with CEBPB; the heterodimer represses expression of DSPP during odontoblast differentiation. Interacts with MOTS-c, a peptide produced by the mitochondrially encoded 12S rRNA MT-RNR1. Cleaved at Leu-104 by the aspartyl protease DDI2 following retrotranslocation, releasing the protein from the endoplasmic reticulum membrane and forming the transcription factor NRF1 that translocates into the nucleus. Ubiquitination is prerequisite for cleavage by aspartyl protease DDI2. In terms of processing, N-glycosylated in normal conditions, when it has a single-pass type II membrane protein topology, with the DNA-binding domain facing the endoplasmic reticulum lumen. Deglycosylated during retrotranslocation to the cytosolic side of the membrane, to have a single-pass type III membrane protein topology with the major part of the protein facing the cytosol. Post-translationally, ubiquitinated by the SCF(FBXW7) complex and SYVN1/HRD1, leading to its degradation by the proteasome. Ubiquitinated during retrotranslocation to the cytosolic side of the membrane: ubiquitination does not lead to degradation and is required for processing by the aspartyl protease DDI2 and subsequent release from the endoplasmic reticulum membrane. Phosphorylation by CK2 at Ser-528 inhibits transcription factor activity, possibly by affecting DNA-binding activity. Phosphorylation at Ser-599 is required for interaction with CEBPB. In terms of processing, ubiquitinated by the SCF(BTRC) complex in the nucleus, leading to its degradation by the proteasome.

It is found in the endoplasmic reticulum membrane. It localises to the nucleus. Its function is as follows. Endoplasmic reticulum membrane sensor that translocates into the nucleus in response to various stresses to act as a transcription factor. Constitutes a precursor of the transcription factor NRF1. Able to detect various cellular stresses, such as cholesterol excess, oxidative stress or proteasome inhibition. In response to stress, it is released from the endoplasmic reticulum membrane following cleavage by the protease DDI2 and translocates into the nucleus to form the transcription factor NRF1. Acts as a key sensor of cholesterol excess: in excess cholesterol conditions, the endoplasmic reticulum membrane form of the protein directly binds cholesterol via its CRAC motif, preventing cleavage and release of the transcription factor NRF1, thereby allowing expression of genes promoting cholesterol removal, such as CD36. Involved in proteasome homeostasis: in response to proteasome inhibition, it is released from the endoplasmic reticulum membrane, translocates to the nucleus and activates expression of genes encoding proteasome subunits. CNC-type bZIP family transcription factor that translocates to the nucleus and regulates expression of target genes in response to various stresses. Heterodimerizes with small-Maf proteins (MAFF, MAFG or MAFK) and binds DNA motifs including the antioxidant response elements (AREs), which regulate expression of genes involved in oxidative stress response. Activates or represses expression of target genes, depending on the context. Plays a key role in cholesterol homeostasis by acting as a sensor of cholesterol excess: in low cholesterol conditions, translocates into the nucleus and represses expression of genes involved in defense against cholesterol excess, such as CD36. In excess cholesterol conditions, the endoplasmic reticulum membrane form of the protein directly binds cholesterol via its CRAC motif, preventing cleavage and release of the transcription factor NRF1, thereby allowing expression of genes promoting cholesterol removal. Critical for redox balance in response to oxidative stress: acts by binding the AREs motifs on promoters and mediating activation of oxidative stress response genes, such as GCLC, GCLM, GSS, MT1 and MT2. Plays an essential role during fetal liver hematopoiesis: probably has a protective function against oxidative stress and is involved in lipid homeostasis in the liver. Involved in proteasome homeostasis: in response to proteasome inhibition, mediates the 'bounce-back' of proteasome subunits by translocating into the nucleus and activating expression of genes encoding proteasome subunits. Also involved in regulating glucose flux. Together with CEBPB; represses expression of DSPP during odontoblast differentiation. In response to ascorbic acid induction, activates expression of SP7/Osterix in osteoblasts. In Homo sapiens (Human), this protein is Endoplasmic reticulum membrane sensor NFE2L1 (NFE2L1).